A 153-amino-acid chain; its full sequence is MYAVVRLRGQVNVRYTIEDTMKMLRLHKVNHCVFVPENPHYKGMVQKVKDYVAYGKIDAKTLAEVLENRGRLEGDTRLTEEYIRENTDYDSIQAFAEAVIEGKSSLKDIPKLKPVFRLHPPRKGHAGIKRTVQQGGVLGNHDENINVLLHKMR.

Belongs to the universal ribosomal protein uL30 family. As to quaternary structure, part of the 50S ribosomal subunit.

In Methanosarcina acetivorans (strain ATCC 35395 / DSM 2834 / JCM 12185 / C2A), this protein is Large ribosomal subunit protein uL30.